The primary structure comprises 287 residues: 26S proteasome non-ATPase regulatory subunit 8 (287 aa).

The residue at position 43 (Ser-43) is a Phosphoserine. The 170-residue stretch at 99 to 268 folds into the PCI domain; the sequence is PSFERYMAQL…QQKPEDTTIP (170 aa). Residue Lys-234 forms a Glycyl lysine isopeptide (Lys-Gly) (interchain with G-Cter in SUMO2) linkage.

This sequence belongs to the proteasome subunit S14 family. In terms of assembly, component of the 19S proteasome regulatory particle complex. The 26S proteasome consists of a 20S core particle (CP) and two 19S regulatory subunits (RP). The regulatory particle is made of a lid composed of 9 subunits including PSMD8, a base containing 6 ATPases and few additional components. Interacts with DDI2. Interacts with TASOR.

Functionally, component of the 26S proteasome, a multiprotein complex involved in the ATP-dependent degradation of ubiquitinated proteins. This complex plays a key role in the maintenance of protein homeostasis by removing misfolded or damaged proteins, which could impair cellular functions, and by removing proteins whose functions are no longer required. Therefore, the proteasome participates in numerous cellular processes, including cell cycle progression, apoptosis, or DNA damage repair. The protein is 26S proteasome non-ATPase regulatory subunit 8 (PSMD8) of Bos taurus (Bovine).